The following is a 311-amino-acid chain: Hevamine-A (311 aa).

An N-terminal signal peptide occupies residues 1–26 (MAKRTQAILLLLLAISLIMSSSHVDG). In terms of domain architecture, GH18 spans 27–302 (GGIAIYWGQN…SSILDSVLFL (276 aa)). Cystine bridges form between Cys-46–Cys-93 and Cys-76–Cys-83. The active-site Proton donor is Glu-153. Cys-185 and Cys-214 are joined by a disulfide. The propeptide at 300-311 (LFLHSEECMTVL) is removed in mature form.

The protein belongs to the glycosyl hydrolase 18 family. Chitinase class II subfamily.

It is found in the vacuole. It carries out the reaction Random endo-hydrolysis of N-acetyl-beta-D-glucosaminide (1-&gt;4)-beta-linkages in chitin and chitodextrins.. The enzyme catalyses Hydrolysis of (1-&gt;4)-beta-linkages between N-acetylmuramic acid and N-acetyl-D-glucosamine residues in a peptidoglycan and between N-acetyl-D-glucosamine residues in chitodextrins.. In terms of biological role, bifunctional enzyme with lysozyme / chitinase activity. May have a role in plugging the latex vessel and cessation of latex flow. This Hevea brasiliensis (Para rubber tree) protein is Hevamine-A.